Reading from the N-terminus, the 249-residue chain is tRNA (guanine-N(1)-)-methyltransferase (249 aa).

Residues G121 and 141 to 146 each bind S-adenosyl-L-methionine; that span reads LGDFVL.

The protein belongs to the RNA methyltransferase TrmD family. As to quaternary structure, homodimer.

The protein localises to the cytoplasm. The catalysed reaction is guanosine(37) in tRNA + S-adenosyl-L-methionine = N(1)-methylguanosine(37) in tRNA + S-adenosyl-L-homocysteine + H(+). Its function is as follows. Specifically methylates guanosine-37 in various tRNAs. The protein is tRNA (guanine-N(1)-)-methyltransferase of Cereibacter sphaeroides (strain ATCC 17023 / DSM 158 / JCM 6121 / CCUG 31486 / LMG 2827 / NBRC 12203 / NCIMB 8253 / ATH 2.4.1.) (Rhodobacter sphaeroides).